Consider the following 274-residue polypeptide: Putative pyruvate, phosphate dikinase regulatory protein 1 (274 aa).

149 to 156 lines the ADP pocket; the sequence is GISRTSKT.

Belongs to the pyruvate, phosphate/water dikinase regulatory protein family. PDRP subfamily.

It carries out the reaction N(tele)-phospho-L-histidyl/L-threonyl-[pyruvate, phosphate dikinase] + ADP = N(tele)-phospho-L-histidyl/O-phospho-L-threonyl-[pyruvate, phosphate dikinase] + AMP + H(+). The enzyme catalyses N(tele)-phospho-L-histidyl/O-phospho-L-threonyl-[pyruvate, phosphate dikinase] + phosphate + H(+) = N(tele)-phospho-L-histidyl/L-threonyl-[pyruvate, phosphate dikinase] + diphosphate. Functionally, bifunctional serine/threonine kinase and phosphorylase involved in the regulation of the pyruvate, phosphate dikinase (PPDK) by catalyzing its phosphorylation/dephosphorylation. The polypeptide is Putative pyruvate, phosphate dikinase regulatory protein 1 (Listeria monocytogenes serotype 4b (strain F2365)).